The primary structure comprises 84 residues: Cytochrome b559 subunit alpha (84 aa).

The Cytoplasmic portion of the chain corresponds to 2 to 20; the sequence is AGTTGERPFSDIITSVRYW. Residues 21-35 form a helical membrane-spanning segment; that stretch reads VIHSITIPALFIAGW. H23 provides a ligand contact to heme. Topologically, residues 36–84 are lumenal; it reads LFVSTGLAYDVFGTPRPDSYYAQEQRSIPLVTDRFEAKQQVETFLEQLK.

It belongs to the PsbE/PsbF family. In terms of assembly, heterodimer of an alpha subunit and a beta subunit. PSII is composed of 1 copy each of membrane proteins PsbA, PsbB, PsbC, PsbD, PsbE, PsbF, PsbH, PsbI, PsbJ, PsbK, PsbL, PsbM, PsbT, PsbX, PsbY, PsbZ, Psb30/Ycf12, peripheral proteins PsbO, CyanoQ (PsbQ), PsbU, PsbV and a large number of cofactors. It forms dimeric complexes. Requires heme b as cofactor.

It localises to the cellular thylakoid membrane. Its function is as follows. This b-type cytochrome is tightly associated with the reaction center of photosystem II (PSII). PSII is a light-driven water:plastoquinone oxidoreductase that uses light energy to abstract electrons from H(2)O, generating O(2) and a proton gradient subsequently used for ATP formation. It consists of a core antenna complex that captures photons, and an electron transfer chain that converts photonic excitation into a charge separation. The polypeptide is Cytochrome b559 subunit alpha (Thermostichus vulcanus (Synechococcus vulcanus)).